Reading from the N-terminus, the 4558-residue chain is Multifunctional-autoprocessing repeats-in-toxin (4558 aa).

The N-terminal stretch at Met1–Ala32 is a signal peptide. 39 RtxA repeats span residues Gly114–Ser131, Gly134–Thr151, Gly154–Leu170, Gly174–Thr197, Gly200–Thr217, Gly220–Thr237, Gly268–His285, Gly288–Phe304, Gly594–His611, Gly614–Thr630, Gly634–Thr651, Gly654–Gly668, Ala751–Gly763, Met769–Asn781, Ala792–Leu808, Met811–Thr826, Met830–Thr845, Gly851–Leu865, Met868–Ala885, Met887–Asn901, Met906–Asp920, Met925–Ala942, Met944–Leu960, Met982–Asn994, Met1001–Ser1016, Gly1041–Leu1053, Ala1077–Asp1089, Ala1097–Val1112, Gly1120–Ile1132, Ala1135–Asn1152, Trp1155–Arg1169, Ala1173–Val1189, Gly1194–Thr1209, Ala1211–Val1227, Ala1230–Phe1246, Lys1252–Thr1266, Ala1268–Thr1285, Ala1306–Ala1323, and Met1325–Asn1342. Disordered stretches follow at residues His1623 to Ser1688, Thr1752 to Ala1779, and Asp1791 to Gly1890. A compositionally biased stretch (polar residues) spans Thr1625 to Leu1634. Basic and acidic residues predominate over residues Ser1635–Gln1654. Over residues Gly1660 to Ala1679 the composition is skewed to polar residues. Residues Asp1791 to His1815 are compositionally biased toward basic and acidic residues. Positions His1879–Ala1888 are enriched in polar residues. The ACD domain occupies Val1988–Ala2422. Residue Ser1999–Glu2003 coordinates ATP. Mg(2+)-binding residues include Glu2003, Glu2065, and Gln2149. ATP is bound at residue Arg2255. Glu2326 is a binding site for Mg(2+). Positions Glu2574 to Leu2658 are membrane localization region (MLD). Residues Glu2734 to Leu3098 form a rho inactivation domain (RID) region. The segment at Val3195–Ala3310 is ABH effector region. A disordered region spans residues Ala3404–Ser3426. Residues Gly3414–Ser3426 show a composition bias toward polar residues. Positions Pro3462–Trp3646 constitute a Peptidase C80 domain. 1D-myo-inositol hexakisphosphate contacts are provided by residues Glu3468–Arg3470, Lys3495–His3496, and Arg3526. His3532 serves as the catalytic For cysteine protease activity. A 1D-myo-inositol hexakisphosphate-binding site is contributed by Ser3577. Residue Cys3581 is the Nucleophile; for cysteine protease activity of the active site. Residues Ser3610–Arg3612, Arg3623–Lys3624, Lys3636, and Lys3641 contribute to the 1D-myo-inositol hexakisphosphate site.

Mg(2+) serves as cofactor.

Its subcellular location is the secreted. The protein resides in the host cytoplasm. It is found in the host cytosol. The protein localises to the host cell membrane. It catalyses the reaction L-lysyl-/S-(2E,6E,10E)-geranylgeranyl-L-cysteinyl-[protein] + hexadecanoyl-CoA = N(6)-hexadecanoyl-L-lysyl-/S-(2E,6E,10E)-geranylgeranyl-L-cysteinyl-[protein] + CoA + H(+). The catalysed reaction is L-lysyl-/S-(2E,6E,10E)-geranylgeranyl-L-cysteinyl-[protein] + dodecanoyl-CoA = N(6)-dodecanoyl-L-lysyl-/S-(2E,6E,10E)-geranylgeranyl-L-cysteinyl-[protein] + CoA + H(+). It carries out the reaction L-lysyl-/S-(2E,6E,10E)-geranylgeranyl-L-cysteinyl-[protein] + decanoyl-CoA = N(6)-decanoyl-L-lysyl-/S-(2E,6E,10E)-geranylgeranyl-L-cysteinyl-[protein] + CoA + H(+). With respect to regulation, protease activity is inhibited by N-ethylmaleimide but not other protease inhibitors. Protease activity is inhibited by aza-leucine epoxide. Protease activity is activated upon binding inositol hexakisphosphate (InsP6) via an allosteric mechanism: the active site is disordered or occluded in the absence of InsP6, protecting the protease active-site sulfhydryl until the toxin enters a eukaryotic cell. Upon processing at the Leu-3441-Ala-3442 site, the peptidase C80 domain is converted to a form with much reduced affinity for InsP6, but is reactivated for high affinity binding of InsP6 by cooperative binding of both a new substrate and InsP6. Reactivation allows cleavage at other sites, specifically at Leu residues between the effector domains. In terms of biological role, precursor of a multifunctional toxin that causes destruction of the actin cytoskeleton by covalent cross-linking of actin and inactivation of Rho GTPases when translocated into the host cytoplasm. Upon translocation into the host cell, undergoes autoprocessing in cis mediated by the peptidase C80 domain (also named CPD domain): the protease activity is activated upon binding inositol hexakisphosphate (InsP6) present at the host cell membrane and delivers the Cysteine protease domain-containing toxin F3 chain to the host cytosol. The Cysteine protease domain-containing toxin F3 chain will then further cleave and release effector toxin chains that cause disassembly of the actin cytoskeleton and enhance V.cholerae colonization of the small intestine, possibly by facilitating evasion of phagocytic cells. Functionally, following autocatalytic cleavage in cis at the Leu-3441-Ala-3442 site, this chain mediates processing in trans to release other individual toxin chains to the host cytosol. Released effector toxin chains cause disassembly of the actin cytoskeleton and enhance V.cholerae colonization of the small intestine, possibly by facilitating evasion of phagocytic cells. Actin-directed toxin that catalyzes the covalent cross-linking of host cytoplasmic monomeric actin. Mediates the cross-link between 'Lys-50' of one monomer and 'Glu-270' of another actin monomer, resulting in formation of highly toxic actin oligomers that cause cell rounding. The toxin can be highly efficient at very low concentrations by acting on formin homology family proteins: toxic actin oligomers bind with high affinity to formins and adversely affect both nucleation and elongation abilities of formins, causing their potent inhibition in both profilin-dependent and independent manners. Acts as an acid--amino-acid ligase that transfers the gamma-phosphoryl group of ATP to the 'Glu-270' actin residue, resulting in the formation of an activated acyl phosphate intermediate. This intermediate is further hydrolyzed and the energy of hydrolysis is utilized for the formation of the amide bond between actin subunits. Its function is as follows. N-epsilon-fatty acyltransferase that mediates lysine-palmitoylation of host Rho GTPase proteins, with a strong preference for host Rac1. After delivery to the host cytosol, localizes to the host cell membrane where it palmitoylates host Rho GTPase proteins, resulting in loss of all active GTP-bound Rho and subsequent actin depolymerization. Prenylation of host Rac1 at the C-terminus is required for lysine-palmitoylation. In terms of biological role, indirectly activates the small GTPase CDC42. The protein is Multifunctional-autoprocessing repeats-in-toxin of Vibrio cholerae serotype O1 (strain ATCC 39315 / El Tor Inaba N16961).